Reading from the N-terminus, the 485-residue chain is N-succinylglutamate 5-semialdehyde dehydrogenase (485 aa).

220–225 provides a ligand contact to NAD(+); the sequence is GSANTG. Active-site residues include glutamate 243 and cysteine 278.

The protein belongs to the aldehyde dehydrogenase family. AstD subfamily.

It carries out the reaction N-succinyl-L-glutamate 5-semialdehyde + NAD(+) + H2O = N-succinyl-L-glutamate + NADH + 2 H(+). Its pathway is amino-acid degradation; L-arginine degradation via AST pathway; L-glutamate and succinate from L-arginine: step 4/5. Its function is as follows. Catalyzes the NAD-dependent reduction of succinylglutamate semialdehyde into succinylglutamate. The protein is N-succinylglutamate 5-semialdehyde dehydrogenase of Vibrio campbellii (strain ATCC BAA-1116).